A 527-amino-acid polypeptide reads, in one-letter code: EGF domain-specific O-linked N-acetylglucosamine transferase (527 aa).

The N-terminal stretch at 1-17 (MLKLLVLGVLLHDVSLS) is a signal peptide. The Required for optimal activity motif lies at 295 to 297 (DYD). A glycan (N-linked (GlcNAc...) asparagine) is linked at asparagine 354. Residues 524 to 527 (RDEL) carry the Prevents secretion from ER motif.

The protein belongs to the glycosyltransferase 61 family.

It is found in the endoplasmic reticulum lumen. The catalysed reaction is L-seryl-[protein] + UDP-N-acetyl-alpha-D-glucosamine = 3-O-(N-acetyl-beta-D-glucosaminyl)-L-seryl-[protein] + UDP + H(+). The enzyme catalyses L-threonyl-[protein] + UDP-N-acetyl-alpha-D-glucosamine = 3-O-(N-acetyl-beta-D-glucosaminyl)-L-threonyl-[protein] + UDP + H(+). Its function is as follows. Catalyzes the transfer of a single N-acetylglucosamine from UDP-GlcNAc to a serine or threonine residue in extracellular proteins resulting in their modification with a beta-linked N-acetylglucosamine (O-GlcNAc). Specifically glycosylates the Thr residue located between the fifth and sixth conserved cysteines of folded EGF-like domains. This chain is EGF domain-specific O-linked N-acetylglucosamine transferase (EOGT), found in Canis lupus familiaris (Dog).